Here is a 164-residue protein sequence, read N- to C-terminus: NAD(P)H-quinone oxidoreductase subunit I, chloroplastic (164 aa).

2 4Fe-4S ferredoxin-type domains span residues 55–84 and 95–124; these read GRIHFEFDKCIACEVCVRVCPIDLPVVDWK and LNYSIDFGICIFCGNCVEYCPTNCLSMTEE. [4Fe-4S] cluster contacts are provided by C64, C67, C70, C74, C104, C107, C110, and C114.

This sequence belongs to the complex I 23 kDa subunit family. In terms of assembly, NDH is composed of at least 16 different subunits, 5 of which are encoded in the nucleus. It depends on [4Fe-4S] cluster as a cofactor.

It is found in the plastid. The protein localises to the chloroplast thylakoid membrane. It carries out the reaction a plastoquinone + NADH + (n+1) H(+)(in) = a plastoquinol + NAD(+) + n H(+)(out). The enzyme catalyses a plastoquinone + NADPH + (n+1) H(+)(in) = a plastoquinol + NADP(+) + n H(+)(out). Its function is as follows. NDH shuttles electrons from NAD(P)H:plastoquinone, via FMN and iron-sulfur (Fe-S) centers, to quinones in the photosynthetic chain and possibly in a chloroplast respiratory chain. The immediate electron acceptor for the enzyme in this species is believed to be plastoquinone. Couples the redox reaction to proton translocation, and thus conserves the redox energy in a proton gradient. This chain is NAD(P)H-quinone oxidoreductase subunit I, chloroplastic, found in Daucus carota (Wild carrot).